Here is a 563-residue protein sequence, read N- to C-terminus: Arginine--tRNA ligase (563 aa).

It belongs to the class-I aminoacyl-tRNA synthetase family. In terms of assembly, monomer.

The catalysed reaction is tRNA(Arg) + L-arginine + ATP = L-arginyl-tRNA(Arg) + AMP + diphosphate. The polypeptide is Arginine--tRNA ligase (Encephalitozoon cuniculi (strain GB-M1) (Microsporidian parasite)).